The primary structure comprises 295 residues: GTPase Era (295 aa).

In terms of domain architecture, Era-type G spans 7–176; it reads KTVSVCIIGR…ITSKAKIAPW (170 aa). Residues 15-22 are G1; that stretch reads GRPNSGKS. A GTP-binding site is contributed by 15 to 22; it reads GRPNSGKS. Residues 41–45 are G2; that stretch reads QTTRS. The tract at residues 62–65 is G3; it reads DTPG. GTP is bound by residues 62–66 and 124–127; these read DTPGI and NKIE. A G4 region spans residues 124–127; that stretch reads NKIE. Residues 152–154 are G5; it reads ISA. The KH type-2 domain occupies 204-281; it reads LQQELPYKLT…HLFLFVKVRE (78 aa).

The protein belongs to the TRAFAC class TrmE-Era-EngA-EngB-Septin-like GTPase superfamily. Era GTPase family. In terms of assembly, monomer.

It is found in the cytoplasm. The protein resides in the cell inner membrane. In terms of biological role, an essential GTPase that binds both GDP and GTP, with rapid nucleotide exchange. Plays a role in 16S rRNA processing and 30S ribosomal subunit biogenesis and possibly also in cell cycle regulation and energy metabolism. The polypeptide is GTPase Era (Rickettsia canadensis (strain McKiel)).